Consider the following 255-residue polypeptide: Pimeloyl-[acyl-carrier protein] methyl ester esterase (255 aa).

Substrate-binding positions include W18, 78–79 (SL), and 139–143 (FLALD). Residue S78 is the Nucleophile of the active site. Residues D203 and H233 contribute to the active site. H233 serves as a coordination point for substrate.

Belongs to the AB hydrolase superfamily. Carboxylesterase BioH family. Monomer.

The protein resides in the cytoplasm. The enzyme catalyses 6-carboxyhexanoyl-[ACP] methyl ester + H2O = 6-carboxyhexanoyl-[ACP] + methanol + H(+). The protein operates within cofactor biosynthesis; biotin biosynthesis. Its function is as follows. The physiological role of BioH is to remove the methyl group introduced by BioC when the pimeloyl moiety is complete. It allows to synthesize pimeloyl-ACP via the fatty acid synthetic pathway through the hydrolysis of the ester bonds of pimeloyl-ACP esters. This Xylella fastidiosa (strain M23) protein is Pimeloyl-[acyl-carrier protein] methyl ester esterase.